A 254-amino-acid polypeptide reads, in one-letter code: MLILLSPAKTMTGTSKIKAPQGTTPRFQQEANEIALHMTQFPIDELSRILKLSPKLAAECYRRYQDFHAEDKQPLQAILAYTGVVFKNISPKDFTEEDFLFSQEHMRFVSGCYGLLRPLDLIKPYRMEFDVKIPELGDGNMYAFWKDRQTNTLIHDVRQGDRILLNLASLDIQPSFQWKEVERSVRIITPEFKIWKNGKAETIVIYAKMCRGQMSRYLIKNRISDPEALKAFTWEGFSYKESMSEGDNWVFLQE.

This sequence belongs to the UPF0246 family.

This is UPF0246 protein BDI_1226 from Parabacteroides distasonis (strain ATCC 8503 / DSM 20701 / CIP 104284 / JCM 5825 / NCTC 11152).